We begin with the raw amino-acid sequence, 709 residues long: ATP-binding cassette sub-family F member 3 (709 aa).

Position 2 is an N-acetylalanine (Ala-2). Ser-83 carries the phosphoserine modification. Over residues 129–143 the composition is skewed to basic and acidic residues; it reads RLKAKQEKRSEKDTL. A disordered region spans residues 129 to 171; sequence RLKAKQEKRSEKDTLKTSNPLVLEEASASQAGSRKESRLESSG. Ser-155, Ser-157, and Ser-161 each carry phosphoserine. Basic and acidic residues predominate over residues 161–171; it reads SRKESRLESSG. ABC transporter domains lie at 178 to 424 and 492 to 707; these read VRIE…LNQQ and LQLD…RREG. 210-217 serves as a coordination point for ATP; the sequence is GRNGLGKT. Ser-283 carries the post-translational modification Phosphoserine. Position 525-532 (525-532) interacts with ATP; the sequence is GENGAGKS.

It belongs to the ABC transporter superfamily. ABCF family. EF3 subfamily.

Its function is as follows. Displays an antiviral effect against flaviviruses in the presence of OAS1B. This is ATP-binding cassette sub-family F member 3 (ABCF3) from Pongo abelii (Sumatran orangutan).